We begin with the raw amino-acid sequence, 253 residues long: Triosephosphate isomerase (253 aa).

12-14 lines the substrate pocket; that stretch reads NWK. The active-site Electrophile is the histidine 100. Glutamate 170 (proton acceptor) is an active-site residue. Residues glycine 176, serine 215, and 236 to 237 contribute to the substrate site; that span reads GG.

The protein belongs to the triosephosphate isomerase family. As to quaternary structure, homodimer.

Its subcellular location is the cytoplasm. The catalysed reaction is D-glyceraldehyde 3-phosphate = dihydroxyacetone phosphate. It functions in the pathway carbohydrate biosynthesis; gluconeogenesis. It participates in carbohydrate degradation; glycolysis; D-glyceraldehyde 3-phosphate from glycerone phosphate: step 1/1. In terms of biological role, involved in the gluconeogenesis. Catalyzes stereospecifically the conversion of dihydroxyacetone phosphate (DHAP) to D-glyceraldehyde-3-phosphate (G3P). This is Triosephosphate isomerase from Rhodopseudomonas palustris (strain BisA53).